The sequence spans 567 residues: Sensor histidine kinase MtrB (567 aa).

Residues 1 to 15 (MIFGSRRRIRGRRGR) show a composition bias toward basic residues. Residues 1–20 (MIFGSRRRIRGRRGRSGPMT) are disordered. 2 helical membrane passes run 42–62 (VVALTLGLSLAVILALGFVLT) and 213–233 (GTMATGGLVLLVLLAGIALLV). Residues 235-287 (RQVVVPVRSASRIAERFAEGHLSERMPVRGEDDMARLAVSFNDMAESLSRQIA) form the HAMP domain. Residues 302-519 (DVSHELRTPL…CFRLTLPLVR (218 aa)) form the Histidine kinase domain. Phosphohistidine; by autocatalysis is present on histidine 305. The interval 526–567 (SPLPMKPIPQPVLQPVAQPNPQPMPPEYKERQRPREHAEWSG) is disordered. Positions 529–551 (PMKPIPQPVLQPVAQPNPQPMPP) are enriched in pro residues. A compositionally biased stretch (basic and acidic residues) spans 552-567 (EYKERQRPREHAEWSG).

The protein resides in the cell membrane. The catalysed reaction is ATP + protein L-histidine = ADP + protein N-phospho-L-histidine.. Member of the two-component regulatory system MtrA/MtrB. Seems to function as a membrane-associated protein kinase that phosphorylates MtrA in response to environmental signals. The chain is Sensor histidine kinase MtrB (mtrB) from Mycobacterium bovis (strain ATCC BAA-935 / AF2122/97).